The sequence spans 148 residues: UPF0756 membrane protein NGK_2061 (148 aa).

4 helical membrane-spanning segments follow: residues 10 to 32, 50 to 70, 85 to 105, and 116 to 136; these read LVTLILLGVVSNNNSITVSATIL, HGLNLGIILLTIGVLSPLVSG, MISAVFIGIFVAWLAGCGVPL, and LLIGTVIGVAFMGGIPVGPLI.

It belongs to the UPF0756 family.

The protein resides in the cell membrane. The protein is UPF0756 membrane protein NGK_2061 of Neisseria gonorrhoeae (strain NCCP11945).